Consider the following 55-residue polypeptide: MAKRSGSGLQSSAGLMRYYEADKNAVHIQPKTVLIVGALAGIAVLFLSAVNGFWP.

Topologically, residues 1-29 (MAKRSGSGLQSSAGLMRYYEADKNAVHIQ) are cytoplasmic. The chain crosses the membrane as a helical span at residues 30-49 (PKTVLIVGALAGIAVLFLSA). Over 50 to 55 (VNGFWP) the chain is Extracellular.

Belongs to the SEC61-beta family. In terms of assembly, component of the protein translocase complex. Heterotrimer consisting of alpha (SecY), beta (SecG) and gamma (SecE) subunits. Can form oligomers of the heterotrimer.

Its subcellular location is the cell membrane. In terms of biological role, involved in protein export. The function of the beta subunit is unknown, but it may be involved in stabilization of the trimeric complex. This Methanosarcina acetivorans (strain ATCC 35395 / DSM 2834 / JCM 12185 / C2A) protein is Preprotein translocase subunit SecG (secG).